A 746-amino-acid chain; its full sequence is WD repeat-containing protein 91 (746 aa).

A coiled-coil region spans residues 183 to 215 (QRTNQVQEENEVLRQKLFALQAEIHRLKKEEQQ). Ser-256 carries the post-translational modification Phosphoserine. Over residues 265 to 278 (LLPQSKKSPSRLSP) the composition is skewed to low complexity. The interval 265 to 336 (LLPQSKKSPS…QHRQRRLQDH (72 aa)) is disordered. Residues 282–299 (PPQTQSSAKKESFGSQTT) are compositionally biased toward polar residues. 2 positions are modified to phosphoserine: Ser-288 and Ser-293. WD repeat units follow at residues 405-444 (EHHS…QTKA), 447-487 (ISKS…NLCE), 514-554 (AASS…QQLQ), 559-598 (PEPI…CAMS), 601-640 (AHCG…LKVS), 663-701 (VQVP…KVLE), and 708-746 (GHRA…AHKV).

It belongs to the WD repeat WDR91 family. Interacts with WDR81; involved in early to late endosome cargo transport. Interacts with BECN1; negatively regulates the PI3 kinase/PI3K activity associated with endosomal membranes.

Its subcellular location is the early endosome membrane. It is found in the late endosome membrane. Functionally, functions as a negative regulator of the PI3 kinase/PI3K activity associated with endosomal membranes via BECN1, a core subunit of the PI3K complex. By modifying the phosphatidylinositol 3-phosphate/PtdInsP3 content of endosomal membranes may regulate endosome fusion, recycling, sorting and early to late endosome transport. It is for instance, required for the delivery of cargos like BST2/tetherin from early to late endosome and thereby participates indirectly to their degradation by the lysosome. May play a role in meiosis. The protein is WD repeat-containing protein 91 of Bos taurus (Bovine).